We begin with the raw amino-acid sequence, 368 residues long: Ribulose bisphosphate carboxylase-like protein 1 (368 aa).

It belongs to the RuBisCO large chain family. Type IV subfamily.

Functionally, unknown. Probably does not have RuBisCO activity. This Rhodopseudomonas palustris (strain ATCC BAA-98 / CGA009) protein is Ribulose bisphosphate carboxylase-like protein 1 (rlp1).